The primary structure comprises 432 residues: Adenylosuccinate synthetase (432 aa).

GTP contacts are provided by residues Gly13–Lys19 and Gly41–Thr43. Asp14 acts as the Proton acceptor in catalysis. Residues Asp14 and Gly41 each coordinate Mg(2+). IMP-binding positions include Asp14–Lys17, Asn39–His42, Thr130, Arg144, Gln225, Thr240, and Arg304. His42 acts as the Proton donor in catalysis. Ala300–Arg306 contributes to the substrate binding site. Residues Arg306, Lys332–Asp334, and Ser415–Gly417 each bind GTP.

It belongs to the adenylosuccinate synthetase family. As to quaternary structure, homodimer. It depends on Mg(2+) as a cofactor.

It localises to the cytoplasm. The catalysed reaction is IMP + L-aspartate + GTP = N(6)-(1,2-dicarboxyethyl)-AMP + GDP + phosphate + 2 H(+). It participates in purine metabolism; AMP biosynthesis via de novo pathway; AMP from IMP: step 1/2. Plays an important role in the de novo pathway of purine nucleotide biosynthesis. Catalyzes the first committed step in the biosynthesis of AMP from IMP. The chain is Adenylosuccinate synthetase from Haemophilus influenzae (strain PittEE).